Here is a 445-residue protein sequence, read N- to C-terminus: Alpha/beta hydrolase psoB (445 aa).

Serine 246 (nucleophile) is an active-site residue.

It belongs to the AB hydrolase superfamily. FUS2 hydrolase family. Homodimer.

The protein operates within secondary metabolite biosynthesis. Functionally, alpha/beta hydrolase; part of the gene cluster that mediates the biosynthesis of pseurotin A, a competitive inhibitor of chitin synthase and an inducer of nerve-cell proliferation. The PKS-NRPS hybrid synthetase psoA is responsible for the biosynthesis of azaspirene, one of the first intermediates having the 1-oxa-7-azaspiro[4,4]-non-2-ene-4,6-dione core of pseurotin, via condensation of one acetyl-CoA, 4 malonyl-CoA, and a L-phenylalanine molecule. The dual-functional monooxygenase/methyltransferase psoF seems to be involved in the addition of the C3 methyl group onto the pseurotin scaffold. Azaspirene is then converted to synerazol through 4 steps including oxidation of C17 by the cytochrome P450 monooxygenase psoD, O-methylation of the hydroxy group of C8 by the methyltransferase psoC, and the trans-to-cis isomerization of the C13 olefin by the glutathione S-transferase psoE. The fourth step of synerazol production is performed by the dual-functional monooxygenase/methyltransferase psoF which seems to catalyze the epoxidation of the intermediate deepoxy-synerazol. Synerazol can be attacked by a water molecule nonenzymatically at two different positions to yield two diol products, pseurotin A and pseurotin D. The polypeptide is Alpha/beta hydrolase psoB (Aspergillus fumigatus (strain ATCC MYA-4609 / CBS 101355 / FGSC A1100 / Af293) (Neosartorya fumigata)).